A 330-amino-acid chain; its full sequence is Methionyl-tRNA formyltransferase (330 aa).

112-115 (SLLP) contacts (6S)-5,6,7,8-tetrahydrofolate.

This sequence belongs to the Fmt family.

The catalysed reaction is L-methionyl-tRNA(fMet) + (6R)-10-formyltetrahydrofolate = N-formyl-L-methionyl-tRNA(fMet) + (6S)-5,6,7,8-tetrahydrofolate + H(+). In terms of biological role, attaches a formyl group to the free amino group of methionyl-tRNA(fMet). The formyl group appears to play a dual role in the initiator identity of N-formylmethionyl-tRNA by promoting its recognition by IF2 and preventing the misappropriation of this tRNA by the elongation apparatus. In Synechococcus sp. (strain RCC307), this protein is Methionyl-tRNA formyltransferase.